We begin with the raw amino-acid sequence, 108 residues long: MSIENLKSFDPFADTGDDEASSSNYIHIRIQQRNGRKTLTTVQGIPEEYDLKRILKVLRKDFGCNGNMVKDDEMGEIIQLQGDQRAKVCEFLITQLAIPKKNIKIHGF.

The disordered stretch occupies residues 1 to 20 (MSIENLKSFDPFADTGDDEA).

It belongs to the SUI1 family.

In terms of biological role, additional factor that functions in concert with eIF-2 and the initiator tRNA in directing the ribosome to the proper start site of translation. The sequence is that of Protein translation factor SUI1 (SUI1A) from Eremothecium gossypii (strain ATCC 10895 / CBS 109.51 / FGSC 9923 / NRRL Y-1056) (Yeast).